Reading from the N-terminus, the 108-residue chain is UPF0145 protein LGAS_1099 (108 aa).

This sequence belongs to the UPF0145 family.

The polypeptide is UPF0145 protein LGAS_1099 (Lactobacillus gasseri (strain ATCC 33323 / DSM 20243 / BCRC 14619 / CIP 102991 / JCM 1131 / KCTC 3163 / NCIMB 11718 / NCTC 13722 / AM63)).